Reading from the N-terminus, the 455-residue chain is Protein king tubby (455 aa).

Residues 35–92 (RPMSGMRGNSRELHAYDGPMQFIGSPHNPDQILSNNSSSVHLSSSMNSSRNNSNNLRS) are disordered. Positions 67 to 92 (LSNNSSSVHLSSSMNSSRNNSNNLRS) are enriched in low complexity. S144 carries the phosphoserine modification.

The protein belongs to the TUB family.

The protein localises to the cytoplasm. The protein resides in the nucleus. It localises to the cell projection. It is found in the cilium membrane. Its subcellular location is the rhabdomere. The protein is Protein king tubby of Drosophila virilis (Fruit fly).